Here is a 222-residue protein sequence, read N- to C-terminus: GTP cyclohydrolase 1 (222 aa).

Zn(2+) contacts are provided by Cys111, His114, and Cys182.

This sequence belongs to the GTP cyclohydrolase I family. As to quaternary structure, toroid-shaped homodecamer, composed of two pentamers of five dimers.

It catalyses the reaction GTP + H2O = 7,8-dihydroneopterin 3'-triphosphate + formate + H(+). It functions in the pathway cofactor biosynthesis; 7,8-dihydroneopterin triphosphate biosynthesis; 7,8-dihydroneopterin triphosphate from GTP: step 1/1. The polypeptide is GTP cyclohydrolase 1 (Salmonella choleraesuis (strain SC-B67)).